The following is a 312-amino-acid chain: Coproporphyrin III ferrochelatase (312 aa).

Fe-coproporphyrin III-binding positions include Tyr-13, Arg-30, 46–47, Ser-54, and Tyr-125; that span reads RY. Fe(2+) is bound by residues His-182 and Glu-263.

Belongs to the ferrochelatase family.

The protein localises to the cytoplasm. The catalysed reaction is Fe-coproporphyrin III + 2 H(+) = coproporphyrin III + Fe(2+). It functions in the pathway porphyrin-containing compound metabolism; protoheme biosynthesis. Functionally, involved in coproporphyrin-dependent heme b biosynthesis. Catalyzes the insertion of ferrous iron into coproporphyrin III to form Fe-coproporphyrin III. In Oceanobacillus iheyensis (strain DSM 14371 / CIP 107618 / JCM 11309 / KCTC 3954 / HTE831), this protein is Coproporphyrin III ferrochelatase.